We begin with the raw amino-acid sequence, 136 residues long: Putative pre-16S rRNA nuclease (136 aa).

It belongs to the YqgF nuclease family.

The protein resides in the cytoplasm. Its function is as follows. Could be a nuclease involved in processing of the 5'-end of pre-16S rRNA. The chain is Putative pre-16S rRNA nuclease from Francisella tularensis subsp. mediasiatica (strain FSC147).